Here is a 407-residue protein sequence, read N- to C-terminus: Ornithine cyclodeaminase (407 aa).

NAD(+) is bound by residues N233, A234, D312, T344, M345, L346, H347, D365, D388, and V389.

This sequence belongs to the AgrE/ArgZ ornithine cyclodeaminase family. NAD(+) is required as a cofactor.

It catalyses the reaction L-ornithine = L-proline + NH4(+). In terms of biological role, catalyzes the conversion of ornithine to proline, with the release of ammonia. This is Ornithine cyclodeaminase from Archaeoglobus fulgidus (strain ATCC 49558 / DSM 4304 / JCM 9628 / NBRC 100126 / VC-16).